A 1420-amino-acid chain; its full sequence is PNVRWEYCNLTQCSDAEGTAVAPPNVTPVPSLEAPSEQAPTEQRPGVQECYHGNGQSYRGTYFTTVTGRTCQAWSSMTPHSHSRTPENYPNGGLIRNYCRNPDPVAAPYCYTMDPNVRWEYCNLTQCSDAEGIAVTPLTVTPVPSLEAPSKQAPTEQRPGVQECYHGNGQSYRGTYFTTVTGRTCQAWSSMTPHSHSRTPENYPNGGLIRNYCRNPDPVAAPYCYTMDPNVRWEYCNLTQCSDAEGTAVAPPNVTPVPSLEAPSEQAPTEQRSGVQECYHGNGQSYRGTYFTTVTGRTCQAWSSMKPHSHSRTPENYPNGGLIRNYCRNPDPVAAPYCYTMDPNVRWEYCNLTQCSDAEGTAVAPPNVTPVPSLEAPSEQAPTEQRLGVQECYHSNGQSYRGTYFTTVTGRTCQAWSSMTPHSHSRTPENYPNAGLVKNYCRNPDPVAAPWCYTTDPSVRWEYCNLTRCSDAEGTAVMPPNIIPVPSLEAFLEQEPTEETPGVQECYYHYGQSYRGTYSTTVTGRTCQAWSSMTPHQHSRTPKNYPNAGLTRNYCRNPDAEIRPWCYTMDPSVRWEYCNLTQCLVTESSVLETLTVVPDPSTQASSEEAPTEQSPEVQDCYHGDGQSYRGSFSTTVTGRTCQSWSSMTPHWHQRTTEYYPDGGLTRNYCRNPDAEIRPWCYTMDPSVRWEYCNLTQCPVTESSVLATSMAVSEQAPMEQSPGVQDCYHGDGQSYRGSFSTTVTGRICQSWSSMTPHWHQRTIEYYPNGGLTKNYCRNPDAEIRPWCYTMDPRVRWEYCNLTQCVVMESSVLATPMVVPVPSREVPSEEAPTENSPGVQDCYQGDGQSYRGTFSTTITGRTCQSWLSMTPHRHRRIPLRYPNAGLTRNYCRNRDAEIRPWCYTMDPSVRWEYCNLTQCPVTESSVLTTPTVVPVPSTEAPSEQAPPEKSPVVQDCYHGDGQSYRGTSSTTVTGRNCQSWSSMIPHWHQRTPENYPNAGLTRNYCRNPDSGKHPWCYTTDPCVRWEYCNLTQCSETESGVLETPTVVPVPSMEAHSEAAPTEQTPVVQQCYHGNGQSYRGTFSTTVTGRTCQSWSSMTPHQHKRTPENHPNDDLTMNYCRNPDADTGPWCFTMDPSVRREYCNLTRCSDTEGTVVTPPTVIPVPSLEAPSEQASSSFDCGKPQVEPKKCPGSIVGGCVAHPHSWPWQVSLRTRFGKHFCGGTLISPEWVLTAACCLETFSRPSFYKVILGAHQEVNLESHVQEIEVSRLFLEPIGADIALLKLSRPAIITDKVIPACLPSPNYVITAWTECYITGWGETQGTFGAGLLKEAQLHVIENTVCNHYEFLNGRVKSTELCAGHLAGGTDRCQGDNGGPVVCFDKDKYILRGITSWGPGCACPNKPGVYVRVSSFVTWIEGVMRNN.

The span at 19–30 (TAVAPPNVTPVP) shows a compositional bias: low complexity. A disordered region spans residues 19 to 46 (TAVAPPNVTPVPSLEAPSEQAPTEQRPG). Kringle domains lie at 49-127 (ECYH…LTQC), 163-241 (ECYH…LTQC), 277-355 (ECYH…LTQC), 391-469 (ECYH…LTRC), and 505-583 (ECYY…LTQC). Disulfide bonds link C50–C127, C71–C110, C99–C122, C164–C241, C185–C224, C213–C236, C278–C355, C299–C338, C327–C350, C392–C469, C413–C452, C441–C464, C506–C583, C527–C566, and C555–C578. Residues 598-617 (PDPSTQASSEEAPTEQSPEV) form a disordered region. A compositionally biased stretch (polar residues) spans 600–616 (PSTQASSEEAPTEQSPE). Kringle domains are found at residues 619–697 (DCYH…LTQC), 725–803 (DCYH…LTQC), 839–917 (DCYQ…LTQC), 953–1031 (DCYH…LTQC), and 1067–1145 (QCYH…LTRC). 19 disulfides stabilise this stretch: C620-C697, C641-C680, C669-C692, C726-C803, C747-C786, C775-C798, C840-C917, C861-C900, C889-C912, C954-C1031, C975-C1014, C1003-C1026, C1068-C1145, C1089-C1128, C1117-C1140, C1217-C1233, C1309-C1376, C1339-C1355, and C1366-C1394. Residues 1191–1418 (IVGGCVAHPH…FVTWIEGVMR (228 aa)) form the Peptidase S1 domain.

Belongs to the peptidase S1 family. Plasminogen subfamily. As to quaternary structure, disulfide-linked to apo-B100. Binds to fibronectin and decorin. In terms of processing, N- and O-glycosylated.

Functionally, apo(a) is the main constituent of lipoprotein(a) (Lp(a)). It has serine proteinase activity and is able of autoproteolysis. Inhibits tissue-type plasminogen activator 1. Lp(a) may be a ligand for megalin/Gp 330. This Macaca mulatta (Rhesus macaque) protein is Apolipoprotein(a) (LPA).